Consider the following 71-residue polypeptide: Exodeoxyribonuclease 7 small subunit (71 aa).

Belongs to the XseB family. As to quaternary structure, heterooligomer composed of large and small subunits.

It is found in the cytoplasm. The enzyme catalyses Exonucleolytic cleavage in either 5'- to 3'- or 3'- to 5'-direction to yield nucleoside 5'-phosphates.. In terms of biological role, bidirectionally degrades single-stranded DNA into large acid-insoluble oligonucleotides, which are then degraded further into small acid-soluble oligonucleotides. This is Exodeoxyribonuclease 7 small subunit from Streptococcus pyogenes serotype M1.